Reading from the N-terminus, the 495-residue chain is Glycerol kinase (495 aa).

ADP is bound at residue threonine 12. ATP-binding residues include threonine 12, threonine 13, and serine 14. Threonine 12 is a binding site for sn-glycerol 3-phosphate. An ADP-binding site is contributed by arginine 16. Sn-glycerol 3-phosphate contacts are provided by arginine 82, glutamate 83, tyrosine 134, and aspartate 243. Glycerol contacts are provided by arginine 82, glutamate 83, tyrosine 134, aspartate 243, and glutamine 244. ADP contacts are provided by threonine 265 and glycine 308. Residues threonine 265, glycine 308, glutamine 312, and glycine 409 each coordinate ATP. Glycine 409 and asparagine 413 together coordinate ADP.

Belongs to the FGGY kinase family.

The enzyme catalyses glycerol + ATP = sn-glycerol 3-phosphate + ADP + H(+). The protein operates within polyol metabolism; glycerol degradation via glycerol kinase pathway; sn-glycerol 3-phosphate from glycerol: step 1/1. Its activity is regulated as follows. Inhibited by fructose 1,6-bisphosphate (FBP). Key enzyme in the regulation of glycerol uptake and metabolism. Catalyzes the phosphorylation of glycerol to yield sn-glycerol 3-phosphate. The polypeptide is Glycerol kinase (Ectopseudomonas mendocina (strain ymp) (Pseudomonas mendocina)).